Reading from the N-terminus, the 521-residue chain is Circadian clock oscillator protein KaiC (521 aa).

KaiC domains are found at residues Met-1–Phe-248 and Ala-262–Glu-521. ATP contacts are provided by Gly-50, Thr-51, Gly-52, Lys-53, Thr-54, Leu-55, Ser-90, Lys-225, Leu-226, Arg-227, Thr-229, His-231, Thr-241, Thr-291, Gly-292, Thr-293, Gly-294, Lys-295, Thr-296, and Leu-297. Thr-54 serves as a coordination point for Mg(2+). Thr-296 is a binding site for Mg(2+). Glu-319 lines the Mg(2+) pocket. Trp-332 serves as a coordination point for ATP. Ser-432 bears the Phosphoserine; by autocatalysis mark. Thr-433 carries the phosphothreonine; by autocatalysis modification. Arg-452, Lys-458, Met-459, Arg-460, Ser-462, His-464, and Lys-466 together coordinate ATP.

Belongs to the KaiC family. In terms of assembly, homohexamer; hexamerization is dependent on ATP-binding. The KaiABC complex composition changes during the circadian cycle to control KaiC phosphorylation. Complexes KaiC(6), KaiA(2-4):KaiC(6), KaiB(6):KaiC(6) and KaiC(6):KaiB(6):KaiA(12) are among the most important forms, many form cooperatively. KaiC interacts with SasA, activating its autokinase function and leading to RpaA activation. Requires Mg(2+) as cofactor. Phosphorylated on serine and threonine residues by autocatalysis. Has a 4 step phosphorylation cycle; the autokinase acts first on Thr-433, then Ser-432. When Ser-432 is modified KaiC switches to an autophosphatase mode, acting first on phospho-Thr-433 then phospho-Ser-432.

It carries out the reaction L-seryl-[protein] + ATP = O-phospho-L-seryl-[protein] + ADP + H(+). It catalyses the reaction L-threonyl-[protein] + ATP = O-phospho-L-threonyl-[protein] + ADP + H(+). The enzyme catalyses ATP + H2O = ADP + phosphate + H(+). With respect to regulation, the interaction with KaiA enhances its phosphorylation status, while the interaction with KaiB decreases it. Its function is as follows. Central component of the KaiABC oscillator complex, which constitutes the main circadian regulator in cyanobacteria. Complex composition changes during the circadian cycle to control KaiC phosphorylation. KaiA stimulates KaiC autophosphorylation, while KaiB sequesters KaiA, leading to KaiC autodephosphorylation. Clock output pathways impact the RpaA transcriptional regulator. KaiC enhances the autophosphorylation activity of SasA, which then transfers its phosphate group to RpaA to activate it. KaiB and KaiC together enhance the phospho-RpaA dephosphatase activity of CikA. In terms of biological role, has a weak, temperature-independent ATPase activity; ATPase activity defines the circadian period. The phosphorylation state of KaiC modulates its ATPase activity and effects KaiB binding. This Rippkaea orientalis (strain PCC 8801 / RF-1) (Cyanothece sp. (strain PCC 8801)) protein is Circadian clock oscillator protein KaiC.